The chain runs to 620 residues: Probable potassium transport system protein Kup (620 aa).

12 helical membrane passes run Leu-11–Phe-31, Ile-51–Val-71, Ile-100–Pro-120, Leu-138–Ala-158, Phe-167–Ile-187, Ala-202–Leu-222, Trp-246–Leu-266, Leu-288–Phe-308, Gly-334–Leu-354, Ala-364–Val-384, Val-396–Thr-416, and Leu-418–Ile-438.

Belongs to the HAK/KUP transporter (TC 2.A.72) family.

The protein localises to the cell inner membrane. It catalyses the reaction K(+)(in) + H(+)(in) = K(+)(out) + H(+)(out). In terms of biological role, transport of potassium into the cell. Likely operates as a K(+):H(+) symporter. The chain is Probable potassium transport system protein Kup from Vibrio cholerae serotype O1 (strain ATCC 39541 / Classical Ogawa 395 / O395).